Here is a 386-residue protein sequence, read N- to C-terminus: D(1)-like dopamine receptor (386 aa).

Residues 1 to 10 show a composition bias toward polar residues; that stretch reads MEIFTTTRGT. The tract at residues 1–28 is disordered; sequence MEIFTTTRGTSAGPEPAPGGHGGTDSPR. Over 1 to 35 the chain is Extracellular; it reads MEIFTTTRGTSAGPEPAPGGHGGTDSPRTSDLSLR. The helical transmembrane segment at 36–56 threads the bilayer; it reads ALTGCVLCILIVSTLLGNALV. The Cytoplasmic segment spans residues 57 to 72; it reads CAAVIKFRHLRSKVTN. The chain crosses the membrane as a helical span at residues 73–92; that stretch reads AFVISLAVSDLFVAVLVMPW. The Extracellular portion of the chain corresponds to 93 to 109; sequence RAVSEVAGVWLFGAFCD. A disulfide bridge links Cys-108 with Cys-188. The helical transmembrane segment at 110–131 threads the bilayer; sequence TWVAFDIMCSTASILHLCIISM. Topologically, residues 132–150 are cytoplasmic; sequence DRYWAISSPFRYERRMTPR. The chain crosses the membrane as a helical span at residues 151–175; it reads FGCVMIGVAWTLSVLISFIPVQLNW. Over 176–195 the chain is Extracellular; the sequence is HARGRERTDPGDCNASLNRT. N-linked (GlcNAc...) asparagine glycosylation is found at Asn-189 and Asn-193. The chain crosses the membrane as a helical span at residues 196-220; it reads YAISSSLISFYIPVLIMVGTYTRIF. Residues 221–266 lie on the Cytoplasmic side of the membrane; that stretch reads RIGRTQIRRISSLERAAPRATRGPALCDEESSLKTSFRRETKVLKT. A helical transmembrane segment spans residues 267–292; it reads LSVIMGVFVFCWLPFFVLNCMVPFCR. The Extracellular segment spans residues 293–305; that stretch reads LEPAAAPCVSDTT. Residues 306-325 form a helical membrane-spanning segment; sequence FSVFVWFGWANSSLNPVIYA. Residues 326 to 386 lie on the Cytoplasmic side of the membrane; sequence FNADFRKAFS…SRGGPYQFAL (61 aa).

Belongs to the G-protein coupled receptor 1 family.

It is found in the cell membrane. The protein localises to the cell projection. It localises to the cilium membrane. In terms of biological role, this is one of the five types (D1 to D5) of receptors for dopamine. The activity of this receptor is mediated by G proteins which activate adenylyl cyclase. This Oreochromis mossambicus (Mozambique tilapia) protein is D(1)-like dopamine receptor.